A 266-amino-acid chain; its full sequence is Apolipoprotein A-I (266 aa).

Residues 1 to 18 (MKAVVLTLAVLFLTGSQA) form the signal peptide. 2 tandem repeats follow at residues 67–88 (LKLL…EQIG) and 89–110 (PVTQ…QEMS). The interval 67–266 (LKLLDNWDSL…DEAAKKLNTQ (200 aa)) is 10 X approximate tandem repeats. Residue M109 is modified to Methionine sulfoxide. The stretch at 111-121 (KDLEEVKQKVQ) is one 3; half-length repeat. 5 consecutive repeat copies span residues 122–143 (PYLD…QKVA), 144–165 (PLGT…EKLT), 166–187 (PLGE…AHLA), 188–209 (PYSD…EGGS), and 210–231 (ASLA…EKAK). The 9; half-length repeat unit spans residues 232–242 (PALEDLRQGLL). Repeat unit 10 spans residues 243–266 (PVLESFKVSLLAAVDEAAKKLNTQ).

It belongs to the apolipoprotein A1/A4/E family. Homodimer. Interacts with APOA1BP and CLU. Component of a sperm activating protein complex (SPAP), consisting of APOA1, an immunoglobulin heavy chain, an immunoglobulin light chain and albumin. Interacts with NDRG1. Interacts with SCGB3A2. Interacts with NAXE and YJEFN3. Glycosylated. In terms of processing, palmitoylated. Post-translationally, phosphorylation sites are present in the extracellular medium.

The protein localises to the secreted. Its function is as follows. Participates in the reverse transport of cholesterol from tissues to the liver for excretion by promoting cholesterol efflux from tissues and by acting as a cofactor for the lecithin cholesterol acyltransferase (LCAT). As part of the SPAP complex, activates spermatozoa motility. The sequence is that of Apolipoprotein A-I (APOA1) from Mustela putorius furo (European domestic ferret).